We begin with the raw amino-acid sequence, 234 residues long: Isoprenyl transferase (234 aa).

The active site involves aspartate 13. Residue aspartate 13 coordinates Mg(2+). Substrate-binding positions include 14 to 17 (GNGR), tryptophan 18, arginine 26, histidine 30, and 58 to 60 (STE). The Proton acceptor role is filled by asparagine 61. Residues tryptophan 62, arginine 64, arginine 180, and 186–188 (RLS) each bind substrate. Glutamate 199 contacts Mg(2+).

It belongs to the UPP synthase family. In terms of assembly, homodimer. It depends on Mg(2+) as a cofactor.

Functionally, catalyzes the condensation of isopentenyl diphosphate (IPP) with allylic pyrophosphates generating different type of terpenoids. This is Isoprenyl transferase (uppS) from Helicobacter pylori (strain ATCC 700392 / 26695) (Campylobacter pylori).